We begin with the raw amino-acid sequence, 149 residues long: Transcriptional repressor NrdR (149 aa).

Residues 3–34 fold into a zinc finger; it reads CPFCSAVDTKVIDSRLVGDGSQVRRRRQCLVC. Positions 49–139 constitute an ATP-cone domain; sequence PRVVKSNGVR…VYRSFEDVRE (91 aa).

The protein belongs to the NrdR family. Zn(2+) is required as a cofactor.

In terms of biological role, negatively regulates transcription of bacterial ribonucleotide reductase nrd genes and operons by binding to NrdR-boxes. This chain is Transcriptional repressor NrdR, found in Edwardsiella ictaluri (strain 93-146).